Consider the following 101-residue polypeptide: Small ribosomal subunit protein uS14m (101 aa).

Belongs to the universal ribosomal protein uS14 family. Component of the mitochondrial ribosome small subunit (28S) which comprises a 12S rRNA and about 30 distinct proteins. Interacts with LIAT1.

The protein localises to the mitochondrion. The polypeptide is Small ribosomal subunit protein uS14m (mrps14) (Dictyostelium discoideum (Social amoeba)).